The chain runs to 129 residues: Transcriptional activator protein (129 aa).

A Nuclear localization signal motif is present at residues 13–28 (KAQHRAAKRRAIRRRR). A zinc finger spans residues 33-50 (CGCSIYIHIDCRNNGFTH). Residues 73 to 118 (LFQDNQRRGSPLHQHQDIPLTNQVQPQPEESIGSPQGISQLPSMDD) are disordered. Positions 91 to 114 (PLTNQVQPQPEESIGSPQGISQLP) are enriched in polar residues. Residues 115 to 129 (SMDDIDDSFWENLFK) form a transactivation region.

The protein belongs to the geminiviridae transcriptional activator protein family. As to quaternary structure, monomer. Homodimer. Homooligomer. Self-interaction correlates with nuclear localization and efficient activation of transcription. Monomers suppress local silencing by interacting with and inactivating host adenosine kinase (ADK) in the cytoplasm. Interacts with and inhibits host SNF1 kinase. Binds to ssDNA. Phosphorylated.

It is found in the host nucleus. It localises to the host cytoplasm. Its function is as follows. Strong activator of the late viral genes promoters. Enhances the expression of the capsid protein and nuclear shuttle protein. Acts as a suppressor of RNA-mediated gene silencing, also known as post-transcriptional gene silencing (PTGS), a mechanism of plant viral defense that limits the accumulation of viral RNAs. Suppresses the host RNA silencing by inhibiting adenosine kinase (ADK), a kinase involved in a general methylation pathway. Also suppresses the host basal defense by interacting with and inhibiting SNF1 kinase, a key regulator of cell metabolism implicated in innate antiviral defense. Determines pathogenicity. The chain is Transcriptional activator protein from Tomato golden mosaic virus (strain Yellow vein) (TGMV).